The chain runs to 900 residues: Translation initiation factor IF-2 (900 aa).

The segment at 48–310 (HLNRDRGNAP…KPSSLQQSFN (263 aa)) is disordered. Over residues 68–82 (STLNVPSTGGKSKSV) the composition is skewed to polar residues. Composition is skewed to basic and acidic residues over residues 85–98 (EVRK…RDPI) and 108–164 (QARR…KEKV). The span at 165–176 (TNQQNENMTKPA) shows a compositional bias: polar residues. The span at 177-237 (QSEKAKREAE…SATKPEESAD (61 aa)) shows a compositional bias: basic and acidic residues. The span at 263–277 (TRTRAAKVTKQKKGN) shows a compositional bias: basic residues. The span at 278–291 (RQSESKADREEARA) shows a compositional bias: basic and acidic residues. Positions 399–568 (FRAPVVTIMG…LLQAEVLELK (170 aa)) constitute a tr-type G domain. Positions 408–415 (GHVDHGKT) are G1. 408 to 415 (GHVDHGKT) lines the GTP pocket. A G2 region spans residues 433-437 (GITQH). A G3 region spans residues 454 to 457 (DTPG). GTP contacts are provided by residues 454-458 (DTPGH) and 508-511 (NKID). A G4 region spans residues 508-511 (NKID). Positions 544 to 546 (SAK) are G5.

Belongs to the TRAFAC class translation factor GTPase superfamily. Classic translation factor GTPase family. IF-2 subfamily.

Its subcellular location is the cytoplasm. Its function is as follows. One of the essential components for the initiation of protein synthesis. Protects formylmethionyl-tRNA from spontaneous hydrolysis and promotes its binding to the 30S ribosomal subunits. Also involved in the hydrolysis of GTP during the formation of the 70S ribosomal complex. The protein is Translation initiation factor IF-2 of Pectobacterium atrosepticum (strain SCRI 1043 / ATCC BAA-672) (Erwinia carotovora subsp. atroseptica).